The following is a 625-amino-acid chain: Probable potassium transport system protein Kup 2 (625 aa).

Transmembrane regions (helical) follow at residues 15–35, 52–72, 98–118, 134–154, 164–184, 212–232, 246–266, 284–304, 336–356, 365–385, 394–414, and 417–437; these read LSFA…LYAF, ILSL…LVIV, GGWL…DGML, LSPN…FFLF, IGVY…ILGF, LALF…ALFA, WFAV…ALVL, FLPV…QAII, VYLP…VVIF, AYGI…GIIA, FKIL…AGNI, and LLTG…VMYT.

The protein belongs to the HAK/KUP transporter (TC 2.A.72) family.

It is found in the cell inner membrane. It catalyses the reaction K(+)(in) + H(+)(in) = K(+)(out) + H(+)(out). In terms of biological role, transport of potassium into the cell. Likely operates as a K(+):H(+) symporter. The protein is Probable potassium transport system protein Kup 2 of Legionella pneumophila (strain Corby).